A 339-amino-acid polypeptide reads, in one-letter code: 4-hydroxy-2-oxovalerate aldolase 3 (339 aa).

Positions 7–259 constitute a Pyruvate carboxyltransferase domain; it reads IRVTDTSLRD…KTGIDFFAIA (253 aa). Substrate is bound at residue 15-16; sequence RD. Asp-16 lines the Mn(2+) pocket. The active-site Proton acceptor is His-19. Ser-169 and His-198 together coordinate substrate. Mn(2+)-binding residues include His-198 and His-200. Tyr-289 serves as a coordination point for substrate.

This sequence belongs to the 4-hydroxy-2-oxovalerate aldolase family.

It carries out the reaction (S)-4-hydroxy-2-oxopentanoate = acetaldehyde + pyruvate. The sequence is that of 4-hydroxy-2-oxovalerate aldolase 3 (hsaF) from Rhodococcus jostii (strain RHA1).